Consider the following 210-residue polypeptide: Leucyl/phenylalanyl-tRNA--protein transferase (210 aa).

The protein belongs to the L/F-transferase family.

The protein localises to the cytoplasm. It catalyses the reaction N-terminal L-lysyl-[protein] + L-leucyl-tRNA(Leu) = N-terminal L-leucyl-L-lysyl-[protein] + tRNA(Leu) + H(+). The enzyme catalyses N-terminal L-arginyl-[protein] + L-leucyl-tRNA(Leu) = N-terminal L-leucyl-L-arginyl-[protein] + tRNA(Leu) + H(+). It carries out the reaction L-phenylalanyl-tRNA(Phe) + an N-terminal L-alpha-aminoacyl-[protein] = an N-terminal L-phenylalanyl-L-alpha-aminoacyl-[protein] + tRNA(Phe). Functionally, functions in the N-end rule pathway of protein degradation where it conjugates Leu, Phe and, less efficiently, Met from aminoacyl-tRNAs to the N-termini of proteins containing an N-terminal arginine or lysine. The sequence is that of Leucyl/phenylalanyl-tRNA--protein transferase from Ruegeria pomeroyi (strain ATCC 700808 / DSM 15171 / DSS-3) (Silicibacter pomeroyi).